The chain runs to 140 residues: Methylglyoxal synthase (140 aa).

Positions 1–140 (MKIALIAHDR…HEGDRRPLAF (140 aa)) constitute an MGS-like domain. Substrate contacts are provided by residues His8, Lys12, 34–37 (TGTT), and 54–55 (SG). Asp60 acts as the Proton donor/acceptor in catalysis. Residue His87 coordinates substrate.

It belongs to the methylglyoxal synthase family.

The catalysed reaction is dihydroxyacetone phosphate = methylglyoxal + phosphate. Catalyzes the formation of methylglyoxal from dihydroxyacetone phosphate. The protein is Methylglyoxal synthase of Enterococcus faecalis (strain ATCC 700802 / V583).